A 385-amino-acid polypeptide reads, in one-letter code: Gibberellin 20 oxidase 5 (385 aa).

The 101-residue stretch at 224-324 (DGSGIFRCNY…RRSLVFFSCP (101 aa)) folds into the Fe2OG dioxygenase domain. 3 residues coordinate Fe cation: His-249, Asp-251, and His-305. Arg-315 is an active-site residue.

Belongs to the iron/ascorbate-dependent oxidoreductase family. GA20OX subfamily. Requires Fe(2+) as cofactor. L-ascorbate is required as a cofactor. Expressed in 3-day-old seedlings and siliques. Detected in dry seeds, roots, old leaves and inflorescences.

It carries out the reaction gibberellin A12 + 2 2-oxoglutarate + 3 O2 + H(+) = gibberellin A9 + 2 succinate + 3 CO2 + 2 H2O. The enzyme catalyses gibberellin A53 + 2 2-oxoglutarate + 3 O2 + H(+) = gibberellin A20 + 2 succinate + 3 CO2 + 2 H2O. It functions in the pathway plant hormone biosynthesis; gibberellin biosynthesis. In terms of biological role, key oxidase enzyme in the biosynthesis of gibberellin that catalyzes the conversion of GA12 and GA53 to GA9 and GA20 respectively, via a three-step oxidation at C-20 of the GA skeleton. The protein is Gibberellin 20 oxidase 5 (GA20OX5) of Arabidopsis thaliana (Mouse-ear cress).